A 256-amino-acid polypeptide reads, in one-letter code: UPF0246 protein HCH_04801 (256 aa).

The protein belongs to the UPF0246 family.

The chain is UPF0246 protein HCH_04801 from Hahella chejuensis (strain KCTC 2396).